We begin with the raw amino-acid sequence, 225 residues long: uncharacterized protein (225 aa).

The next 4 membrane-spanning stretches (helical) occupy residues 40-60, 63-83, 151-171, and 176-196; these read LISL…LSIV, LAFF…PFSF, LSET…LTIL, and IFSL…IVSL.

It localises to the membrane. This is an uncharacterized protein from Saccharomyces cerevisiae (strain ATCC 204508 / S288c) (Baker's yeast).